Here is a 344-residue protein sequence, read N- to C-terminus: Phosphate acyltransferase (344 aa).

It belongs to the PlsX family. In terms of assembly, homodimer. Probably interacts with PlsY.

The protein localises to the cytoplasm. The catalysed reaction is a fatty acyl-[ACP] + phosphate = an acyl phosphate + holo-[ACP]. It participates in lipid metabolism; phospholipid metabolism. Catalyzes the reversible formation of acyl-phosphate (acyl-PO(4)) from acyl-[acyl-carrier-protein] (acyl-ACP). This enzyme utilizes acyl-ACP as fatty acyl donor, but not acyl-CoA. This Yersinia pestis bv. Antiqua (strain Antiqua) protein is Phosphate acyltransferase.